A 1253-amino-acid polypeptide reads, in one-letter code: Guanine nucleotide exchange factor SDC25 (1253 aa).

Residues 26–98 form the SH3 domain; that stretch reads QPIDVVECTY…PPSFTRSILN (73 aa). Residues 624–649 are disordered; it reads LNLDNAKDKKNGSQNTDIQEEEDEYE. Residues 782-914 form the N-terminal Ras-GEF domain; that stretch reads GPIVRIKGGS…ELLKEVNQKF (133 aa). In terms of domain architecture, Ras-GEF spans 952–1199; the sequence is VDPVLFATQL…QYQLSLIIEP (248 aa). The segment at 1202–1253 is disordered; that stretch reads RKKVVPNSNSNNKSQEKSRDDQTDEGKTSTKKDRFPKFQLHKTKKKAPKVSK. Over residues 1215–1237 the composition is skewed to basic and acidic residues; sequence SQEKSRDDQTDEGKTSTKKDRFP. Residues 1240–1253 are compositionally biased toward basic residues; that stretch reads QLHKTKKKAPKVSK.

Its function is as follows. Promotes the exchange of Ras-bound GDP by GTP. This Saccharomyces cerevisiae (Baker's yeast) protein is Guanine nucleotide exchange factor SDC25 (SDC25).